Here is a 424-residue protein sequence, read N- to C-terminus: Interferon regulatory factor 8 (424 aa).

Residues 7-114 (GRRLRQWLIE…EPYKVYRIVP (108 aa)) constitute a DNA-binding region (IRF tryptophan pentad repeat).

This sequence belongs to the IRF family. Interacts with COPS2. Interacts (via C-terminus) with TRIM21 (via C-terminus). Interacts with the BATF-JUNB heterodimer. Interacts with BATF (via bZIP domain); the interaction is direct. Interacts with SPI1. Ubiquitinated. Ubiquitination by TRIM21 in macrophages, a process that is strongly increased upon interferon gamma stimulation, leds to the enhanced transcriptional activity of target cytokine genes. Ubiquitination leads to its degradation by the proteasome. In terms of processing, sumoylated with SUMO3. Desumoylated by SENP1. Expressed in bone marrow macrophages (at protein level). Mainly expressed in lymphoid tissues. Predominantly expressed in CD8(+)-expressing dendritic cells.

It localises to the nucleus. The protein localises to the cytoplasm. Transcription factor that specifically binds to the upstream regulatory region of type I interferon (IFN) and IFN-inducible MHC class I genes (the interferon consensus sequence (ICS)). Can both act as a transcriptional activator or repressor. Plays a negative regulatory role in cells of the immune system. Involved in CD8(+) dendritic cell differentiation by forming a complex with the BATF-JUNB heterodimer in immune cells, leading to recognition of AICE sequence (5'-TGAnTCA/GAAA-3'), an immune-specific regulatory element, followed by cooperative binding of BATF and IRF8 and activation of genes. Required for the development of plasmacytoid dendritic cells (pDCs), which produce most of the type I IFN in response to viral infection. Positively regulates macroautophagy in dendritic cells. Acts as a transcriptional repressor of osteoclast differentiation factors such as NFATC1 and EEIG1. The sequence is that of Interferon regulatory factor 8 from Mus musculus (Mouse).